A 120-amino-acid chain; its full sequence is uncharacterized protein (120 aa).

The segment at 90–120 is disordered; that stretch reads SLASRGGHMTQSGQCHVSGSLLGRGHKSRGR.

This is an uncharacterized protein from Homo sapiens (Human).